The following is a 167-amino-acid chain: Adenylylsulfate reductase subunit beta (167 aa).

4Fe-4S ferredoxin-type domains are found at residues 1–35 (MPTF…LDPE) and 38–67 (KAFN…ARPY). [4Fe-4S] cluster contacts are provided by cysteine 10, cysteine 13, cysteine 21, cysteine 25, cysteine 47, cysteine 50, cysteine 53, and cysteine 57.

In terms of assembly, heterodimer composed of AprA and AprB. The heterodimers can dimerize to form heterotetramers. Requires [4Fe-4S] cluster as cofactor.

The protein localises to the cytoplasm. Functionally, iron-sulfur cluster subunit of the adenylylsulfate reductase which catalyzes reversibly the reduction of adenosine 5'-phosphosulfate (APS) to sulfite and AMP during dissimilatory sulfate reduction. The iron-sulfur cluster 2 is thought to accept electrons from a still unknown electron donor and transfer electrons to the iron-sulfur cluster 1 of this protein and then onto the FAD of AprA. The polypeptide is Adenylylsulfate reductase subunit beta (Megalodesulfovibrio gigas (strain ATCC 19364 / DSM 1382 / NCIMB 9332 / VKM B-1759) (Desulfovibrio gigas)).